Consider the following 503-residue polypeptide: Basic immunoglobulin-like variable motif-containing protein (503 aa).

Positions 1–26 (MPNVAETERSNDSGNGEHKSERKSPE) are enriched in basic and acidic residues. 3 disordered regions span residues 1–33 (MPNVAETERSNDSGNGEHKSERKSPEENLQGAV), 152–184 (TTNSKHKSGNAKKQVSKRKTSDKKGRYQKECPQ), and 438–469 (ESQPPTHAQGIAKSESEDNISKKQHGRLGRSF). The segment covering 155 to 172 (SKHKSGNAKKQVSKRKTS) has biased composition (basic residues). The span at 173–184 (DKKGRYQKECPQ) shows a compositional bias: basic and acidic residues.

It belongs to the BIVM family. In terms of tissue distribution, widely expressed. Expressed at higher level in spleen, ovary, small intestine, colon, peripheral blood leukocytes and liver. Also expressed in testis, ovary, aorta, appendix, trachea, pituitary gland, bladder, uterus, spinal cord, salivary gland, stomach, mammary gland and bone marrow. Weakly or not expressed in fetal spleen, adult thymus and certain cancer cell lines.

Its subcellular location is the cytoplasm. The protein resides in the nucleus. This Homo sapiens (Human) protein is Basic immunoglobulin-like variable motif-containing protein (BIVM).